The chain runs to 579 residues: 2-succinyl-5-enolpyruvyl-6-hydroxy-3-cyclohexene-1-carboxylate synthase (579 aa).

It belongs to the TPP enzyme family. MenD subfamily. As to quaternary structure, homodimer. Mg(2+) is required as a cofactor. Requires Mn(2+) as cofactor. It depends on thiamine diphosphate as a cofactor.

The catalysed reaction is isochorismate + 2-oxoglutarate + H(+) = 5-enolpyruvoyl-6-hydroxy-2-succinyl-cyclohex-3-ene-1-carboxylate + CO2. It participates in quinol/quinone metabolism; 1,4-dihydroxy-2-naphthoate biosynthesis; 1,4-dihydroxy-2-naphthoate from chorismate: step 2/7. The protein operates within quinol/quinone metabolism; menaquinone biosynthesis. In terms of biological role, catalyzes the thiamine diphosphate-dependent decarboxylation of 2-oxoglutarate and the subsequent addition of the resulting succinic semialdehyde-thiamine pyrophosphate anion to isochorismate to yield 2-succinyl-5-enolpyruvyl-6-hydroxy-3-cyclohexene-1-carboxylate (SEPHCHC). The protein is 2-succinyl-5-enolpyruvyl-6-hydroxy-3-cyclohexene-1-carboxylate synthase of Oceanobacillus iheyensis (strain DSM 14371 / CIP 107618 / JCM 11309 / KCTC 3954 / HTE831).